The primary structure comprises 118 residues: Large ribosomal subunit protein bL20 (118 aa).

It belongs to the bacterial ribosomal protein bL20 family.

Its function is as follows. Binds directly to 23S ribosomal RNA and is necessary for the in vitro assembly process of the 50S ribosomal subunit. It is not involved in the protein synthesizing functions of that subunit. The chain is Large ribosomal subunit protein bL20 from Aeromonas hydrophila subsp. hydrophila (strain ATCC 7966 / DSM 30187 / BCRC 13018 / CCUG 14551 / JCM 1027 / KCTC 2358 / NCIMB 9240 / NCTC 8049).